Here is a 903-residue protein sequence, read N- to C-terminus: Protein U7 (903 aa).

A helical transmembrane segment spans residues 665-685 (KALLTFLTNIVFIVFVVNTLY).

This sequence belongs to the herpesviridae US22 family.

The protein resides in the host membrane. The protein is Protein U7 (U7) of Human herpesvirus 6B (strain Z29) (HHV-6 variant B).